The primary structure comprises 336 residues: Mitochondrial amidoxime reducing component 2 (336 aa).

The N-terminal 35 residues, 1–35 (MGAAGSSALARLGLPALPGPRWLGVAALGLAAVAL), are a transit peptide targeting the mitochondrion. Residues Lys138, Lys144, Lys173, Lys187, Lys287, and Lys294 each participate in a glycyl lysine isopeptide (Lys-Gly) (interchain with G-Cter in ubiquitin) cross-link. Residues 188–334 (ARASNEIFPS…LKVGDPVYQM (147 aa)) form the MOSC domain.

Component of a complex composed of cytochrome b5, NADH-cytochrome b5 reductase (CYB5R3) and MTARC2. The cofactor is Mo-molybdopterin. In terms of processing, ubiquitinated by PRKN during mitophagy, leading to its degradation and enhancement of mitophagy. Deubiquitinated by USP30.

The protein resides in the mitochondrion outer membrane. It localises to the peroxisome. It carries out the reaction N(omega)-hydroxy-L-arginine + 2 Fe(II)-[cytochrome b5] + 2 H(+) = L-arginine + 2 Fe(III)-[cytochrome b5] + H2O. Catalyzes the reduction of N-oxygenated molecules, acting as a counterpart of cytochrome P450 and flavin-containing monooxygenases in metabolic cycles. As a component of prodrug-converting system, reduces a multitude of N-hydroxylated prodrugs particularly amidoximes, leading to increased drug bioavailability. May be involved in mitochondrial N(omega)-hydroxy-L-arginine (NOHA) reduction, regulating endogenous nitric oxide levels and biosynthesis. Postulated to cleave the N-OH bond of N-hydroxylated substrates in concert with electron transfer from NADH to cytochrome b5 reductase then to cytochrome b5, the ultimate electron donor that primes the active site for substrate reduction. This chain is Mitochondrial amidoxime reducing component 2 (MTARC2), found in Bos taurus (Bovine).